A 291-amino-acid chain; its full sequence is Proteasome subunit beta (291 aa).

Residues 1 to 56 constitute a propeptide, removed in mature form; by autocatalysis; that stretch reads MTRSFPDRLPTNLAFPGISVINQSSFVDLLRRQAPELLPVSLGGGQSGGGQQLSHG. Catalysis depends on T57, which acts as the Nucleophile.

The protein belongs to the peptidase T1B family. The 20S proteasome core is composed of 14 alpha and 14 beta subunits that assemble into four stacked heptameric rings, resulting in a barrel-shaped structure. The two inner rings, each composed of seven catalytic beta subunits, are sandwiched by two outer rings, each composed of seven alpha subunits. The catalytic chamber with the active sites is on the inside of the barrel. Has a gated structure, the ends of the cylinder being occluded by the N-termini of the alpha-subunits. Is capped by the proteasome-associated ATPase, ARC.

The protein localises to the cytoplasm. The catalysed reaction is Cleavage of peptide bonds with very broad specificity.. It participates in protein degradation; proteasomal Pup-dependent pathway. The formation of the proteasomal ATPase ARC-20S proteasome complex, likely via the docking of the C-termini of ARC into the intersubunit pockets in the alpha-rings, may trigger opening of the gate for substrate entry. Interconversion between the open-gate and close-gate conformations leads to a dynamic regulation of the 20S proteasome proteolysis activity. Functionally, component of the proteasome core, a large protease complex with broad specificity involved in protein degradation. The protein is Proteasome subunit beta of Mycobacterium leprae (strain Br4923).